We begin with the raw amino-acid sequence, 267 residues long: 4-hydroxy-tetrahydrodipicolinate reductase (267 aa).

NAD(+)-binding positions include 9-14 (GVSGRM) and Asp35. Arg36 provides a ligand contact to NADP(+). NAD(+) contacts are provided by residues 98-100 (GTT) and 122-125 (APNM). Residue His155 is the Proton donor/acceptor of the active site. His156 lines the (S)-2,3,4,5-tetrahydrodipicolinate pocket. Lys159 serves as the catalytic Proton donor. 165–166 (GT) serves as a coordination point for (S)-2,3,4,5-tetrahydrodipicolinate.

It belongs to the DapB family.

It localises to the cytoplasm. The catalysed reaction is (S)-2,3,4,5-tetrahydrodipicolinate + NAD(+) + H2O = (2S,4S)-4-hydroxy-2,3,4,5-tetrahydrodipicolinate + NADH + H(+). It catalyses the reaction (S)-2,3,4,5-tetrahydrodipicolinate + NADP(+) + H2O = (2S,4S)-4-hydroxy-2,3,4,5-tetrahydrodipicolinate + NADPH + H(+). Its pathway is amino-acid biosynthesis; L-lysine biosynthesis via DAP pathway; (S)-tetrahydrodipicolinate from L-aspartate: step 4/4. Its function is as follows. Catalyzes the conversion of 4-hydroxy-tetrahydrodipicolinate (HTPA) to tetrahydrodipicolinate. The polypeptide is 4-hydroxy-tetrahydrodipicolinate reductase (Thiobacillus denitrificans (strain ATCC 25259 / T1)).